Here is a 381-residue protein sequence, read N- to C-terminus: UDP-4-amino-4-deoxy-L-arabinose--oxoglutarate aminotransferase (381 aa).

Lysine 182 bears the N6-(pyridoxal phosphate)lysine mark.

The protein belongs to the DegT/DnrJ/EryC1 family. ArnB subfamily. In terms of assembly, homodimer. Requires pyridoxal 5'-phosphate as cofactor.

It carries out the reaction UDP-4-amino-4-deoxy-beta-L-arabinose + 2-oxoglutarate = UDP-beta-L-threo-pentopyranos-4-ulose + L-glutamate. The protein operates within nucleotide-sugar biosynthesis; UDP-4-deoxy-4-formamido-beta-L-arabinose biosynthesis; UDP-4-deoxy-4-formamido-beta-L-arabinose from UDP-alpha-D-glucuronate: step 2/3. It participates in bacterial outer membrane biogenesis; lipopolysaccharide biosynthesis. Its function is as follows. Catalyzes the conversion of UDP-4-keto-arabinose (UDP-Ara4O) to UDP-4-amino-4-deoxy-L-arabinose (UDP-L-Ara4N). The modified arabinose is attached to lipid A and is required for resistance to polymyxin and cationic antimicrobial peptides. This Edwardsiella ictaluri (strain 93-146) protein is UDP-4-amino-4-deoxy-L-arabinose--oxoglutarate aminotransferase.